Here is a 1712-residue protein sequence, read N- to C-terminus: Collagen alpha-2(IV) chain (1712 aa).

A signal peptide spans 1–25; sequence MGRDQRAVAGPALRRWLLLGTVTVG. A propeptide spans 26–183 (N-terminal propeptide (7S domain)); that stretch reads FLAQSVLAGV…LPKEERDRYR (158 aa). Disordered stretches follow at residues 60–237, 302–448, 507–640, 690–906, and 1157–1480; these read RGQP…GFYG, GLRG…PDGF, INGE…DAGL, GLPG…SPGF, and TGPP…GLPG. Residues 68–84 show a composition bias toward low complexity; the sequence is PQGYNGPPGLQGFPGLQ. A compositionally biased stretch (gly residues) spans 121-130; sequence GHPGQGGPRG. The N-linked (GlcNAc...) asparagine glycan is linked to asparagine 138. The segment covering 140 to 153 has biased composition (low complexity); sequence TQGDSGPQGPPGSE. The segment covering 175 to 186 has biased composition (basic and acidic residues); the sequence is PKEERDRYRGEP. The triple-helical region stretch occupies residues 184-1484; that stretch reads GEPGEPGLVG…SPGLPGMPGR (1301 aa). Composition is skewed to pro residues over residues 215–224 and 433–445; these read RPGPPGPPGP and PPGP…PPGP. Composition is skewed to basic and acidic residues over residues 511 to 520 and 571 to 582; these read PGRKGDRGDP and KGDDGSPGRDGL. Composition is skewed to low complexity over residues 628 to 640 and 698 to 710; these read LKGQ…DAGL and TGAK…PGFA. The span at 711–720 shows a compositional bias: gly residues; sequence GADGGPGPRG. Residues 721–730 are compositionally biased toward low complexity; sequence LPGDAGREGF. Residues 752–766 show a composition bias toward pro residues; it reads DGSPGPIGLPGPDGP. Low complexity-rich tracts occupy residues 769–778, 813–823, 831–844, 1302–1328, and 1400–1421; these read ERGLPGEVLG, MPGMPGLKGQP, QPGL…HGFP, GSAA…KGWA, and QPGT…EMGP. The Collagen IV NC1 domain maps to 1489-1712; that stretch reads GYLLVKHSQT…SRCQVCMKNL (224 aa). Tyrosine 1490 carries the post-translational modification 3'-bromotyrosine. Intrachain disulfides connect cysteine 1504-cysteine 1593, cysteine 1537-cysteine 1590, cysteine 1549-cysteine 1555, cysteine 1612-cysteine 1708, cysteine 1646-cysteine 1705, and cysteine 1658-cysteine 1665.

Belongs to the type IV collagen family. In terms of assembly, there are six type IV collagen isoforms, alpha 1(IV)-alpha 6(IV), each of which can form a triple helix structure with 2 other chains to generate type IV collagen network. Interacts with EFEMP2. In terms of processing, prolines at the third position of the tripeptide repeating unit (G-X-Y) are hydroxylated in some or all of the chains. Post-translationally, type IV collagens contain numerous cysteine residues which are involved in inter- and intramolecular disulfide bonding. 12 of these, located in the NC1 domain, are conserved in all known type IV collagens. The trimeric structure of the NC1 domains is stabilized by covalent bonds between Lys and Met residues. In terms of processing, proteolytic processing produces the C-terminal NC1 peptide, canstatin.

It localises to the secreted. Its subcellular location is the extracellular space. The protein resides in the extracellular matrix. It is found in the basement membrane. In terms of biological role, type IV collagen is the major structural component of glomerular basement membranes (GBM), forming a 'chicken-wire' meshwork together with laminins, proteoglycans and entactin/nidogen. Its function is as follows. Canstatin, a cleavage product corresponding to the collagen alpha 2(IV) NC1 domain, possesses both anti-angiogenic and anti-tumor cell activity. It inhibits proliferation and migration of endothelial cells, reduces mitochondrial membrane potential, and induces apoptosis. Specifically induces Fas-dependent apoptosis and activates procaspase-8 and -9 activity. Ligand for alphavbeta3 and alphavbeta5 integrins. The chain is Collagen alpha-2(IV) chain from Homo sapiens (Human).